We begin with the raw amino-acid sequence, 227 residues long: PKHD-type hydroxylase BURPS668_A1690 (227 aa).

The Fe2OG dioxygenase domain occupies 78 to 178 (KVFPPLFNRY…RVASFFWIQS (101 aa)). Fe cation is bound by residues histidine 96, aspartate 98, and histidine 159. Arginine 169 is a 2-oxoglutarate binding site.

The cofactor is Fe(2+). Requires L-ascorbate as cofactor.

This Burkholderia pseudomallei (strain 668) protein is PKHD-type hydroxylase BURPS668_A1690.